The primary structure comprises 220 residues: Metalloproteinase inhibitor 2 (220 aa).

An N-terminal signal peptide occupies residues 1–26 (MPGAALPSLLAWLAVLLLGRARPADA). Cys-27 is a Zn(2+) binding site. 2 involved in metalloproteinase-binding regions span residues 27–30 (CSCS) and 95–96 (TE). Disulfide bonds link Cys-27–Cys-98, Cys-29–Cys-127, Cys-39–Cys-152, Cys-154–Cys-201, Cys-159–Cys-164, and Cys-172–Cys-193. Residues 27–152 (CSCSPIHPQQ…SLNQRYQMGC (126 aa)) form the NTR domain.

The protein belongs to the protease inhibitor I35 (TIMP) family. The activity of TIMP2 is dependent on the presence of disulfide bonds.

It localises to the secreted. In terms of biological role, complexes with metalloproteinases (such as collagenases) and irreversibly inactivates them by binding to their catalytic zinc cofactor. This chain is Metalloproteinase inhibitor 2 (TIMP2), found in Gallus gallus (Chicken).